We begin with the raw amino-acid sequence, 879 residues long: Alanine--tRNA ligase (879 aa).

The Zn(2+) site is built by histidine 566, histidine 570, cysteine 668, and histidine 672.

The protein belongs to the class-II aminoacyl-tRNA synthetase family. Zn(2+) is required as a cofactor.

The protein resides in the cytoplasm. The catalysed reaction is tRNA(Ala) + L-alanine + ATP = L-alanyl-tRNA(Ala) + AMP + diphosphate. In terms of biological role, catalyzes the attachment of alanine to tRNA(Ala) in a two-step reaction: alanine is first activated by ATP to form Ala-AMP and then transferred to the acceptor end of tRNA(Ala). Also edits incorrectly charged Ser-tRNA(Ala) and Gly-tRNA(Ala) via its editing domain. This is Alanine--tRNA ligase from Clostridium botulinum (strain Hall / ATCC 3502 / NCTC 13319 / Type A).